The chain runs to 121 residues: Putative iron-sulfur cluster insertion protein ErpA 1 (121 aa).

Cysteine 49, cysteine 113, and cysteine 115 together coordinate iron-sulfur cluster.

This sequence belongs to the HesB/IscA family. Homodimer. Iron-sulfur cluster serves as cofactor.

In terms of biological role, required for insertion of 4Fe-4S clusters. The polypeptide is Putative iron-sulfur cluster insertion protein ErpA 1 (Polaromonas naphthalenivorans (strain CJ2)).